A 222-amino-acid polypeptide reads, in one-letter code: Probable pyridoxal 5'-phosphate synthase subunit SNO3 (222 aa).

58-60 (GES) is an L-glutamine binding site. C91 serves as the catalytic Nucleophile. L-glutamine-binding positions include R120 and 151 to 152 (IR). Catalysis depends on charge relay system residues H197 and E199.

This sequence belongs to the glutaminase PdxT/SNO family.

The catalysed reaction is aldehydo-D-ribose 5-phosphate + D-glyceraldehyde 3-phosphate + L-glutamine = pyridoxal 5'-phosphate + L-glutamate + phosphate + 3 H2O + H(+). It catalyses the reaction L-glutamine + H2O = L-glutamate + NH4(+). Its pathway is cofactor biosynthesis; pyridoxal 5'-phosphate biosynthesis. Its function is as follows. Catalyzes the hydrolysis of glutamine to glutamate and ammonia as part of the biosynthesis of pyridoxal 5'-phosphate. The resulting ammonia molecule is channeled to the active site of a SNZ isoform. This is Probable pyridoxal 5'-phosphate synthase subunit SNO3 (SNO3) from Saccharomyces cerevisiae (strain ATCC 204508 / S288c) (Baker's yeast).